A 141-amino-acid chain; its full sequence is Large ribosomal subunit protein uL11 (141 aa).

This sequence belongs to the universal ribosomal protein uL11 family. In terms of assembly, part of the ribosomal stalk of the 50S ribosomal subunit. Interacts with L10 and the large rRNA to form the base of the stalk. L10 forms an elongated spine to which L12 dimers bind in a sequential fashion forming a multimeric L10(L12)X complex. In terms of processing, one or more lysine residues are methylated.

In terms of biological role, forms part of the ribosomal stalk which helps the ribosome interact with GTP-bound translation factors. In Ruminiclostridium cellulolyticum (strain ATCC 35319 / DSM 5812 / JCM 6584 / H10) (Clostridium cellulolyticum), this protein is Large ribosomal subunit protein uL11.